A 110-amino-acid chain; its full sequence is Large ribosomal subunit protein uL22 (110 aa).

It belongs to the universal ribosomal protein uL22 family. Part of the 50S ribosomal subunit.

Functionally, this protein binds specifically to 23S rRNA; its binding is stimulated by other ribosomal proteins, e.g. L4, L17, and L20. It is important during the early stages of 50S assembly. It makes multiple contacts with different domains of the 23S rRNA in the assembled 50S subunit and ribosome. Its function is as follows. The globular domain of the protein is located near the polypeptide exit tunnel on the outside of the subunit, while an extended beta-hairpin is found that lines the wall of the exit tunnel in the center of the 70S ribosome. The protein is Large ribosomal subunit protein uL22 of Mycoplasma mobile (strain ATCC 43663 / 163K / NCTC 11711) (Mesomycoplasma mobile).